Reading from the N-terminus, the 76-residue chain is Adropin (76 aa).

A signal peptide spans 1-33 (MGAAISQGALIAIVCNGLVGFLLLLLWVILCWA). The tract at residues 41–76 (VDSLSESSPNSSPGPCPEKAPPPQKPSHEGSYLLQP) is disordered. Positions 52 to 65 (SPGPCPEKAPPPQK) are enriched in pro residues.

Expressed in liver and brain.

The protein localises to the secreted. Involved in the regulation of glucose homeostasis and lipid metabolism. This Homo sapiens (Human) protein is Adropin (ENHO).